The chain runs to 132 residues: Small ribosomal subunit protein uS8 (132 aa).

It belongs to the universal ribosomal protein uS8 family. As to quaternary structure, part of the 30S ribosomal subunit. Contacts proteins S5 and S12.

One of the primary rRNA binding proteins, it binds directly to 16S rRNA central domain where it helps coordinate assembly of the platform of the 30S subunit. This is Small ribosomal subunit protein uS8 from Renibacterium salmoninarum (strain ATCC 33209 / DSM 20767 / JCM 11484 / NBRC 15589 / NCIMB 2235).